The sequence spans 364 residues: Aminomethyltransferase (364 aa).

It belongs to the GcvT family. As to quaternary structure, the glycine cleavage system is composed of four proteins: P, T, L and H.

It catalyses the reaction N(6)-[(R)-S(8)-aminomethyldihydrolipoyl]-L-lysyl-[protein] + (6S)-5,6,7,8-tetrahydrofolate = N(6)-[(R)-dihydrolipoyl]-L-lysyl-[protein] + (6R)-5,10-methylene-5,6,7,8-tetrahydrofolate + NH4(+). The glycine cleavage system catalyzes the degradation of glycine. This is Aminomethyltransferase from Shewanella putrefaciens (strain CN-32 / ATCC BAA-453).